A 354-amino-acid chain; its full sequence is Glyceraldehyde-3-phosphate dehydrogenase (354 aa).

Residues 11–12 (TI) and Gly-108 contribute to the NAD(+) site. Residue 137 to 139 (SCN) coordinates D-glyceraldehyde 3-phosphate. The Nucleophile role is filled by Cys-138. Arg-166 provides a ligand contact to NAD(+). 192 to 193 (HG) contributes to the D-glyceraldehyde 3-phosphate binding site. Gln-299 provides a ligand contact to NAD(+).

It belongs to the glyceraldehyde-3-phosphate dehydrogenase family. Homotetramer.

The protein resides in the cytoplasm. The enzyme catalyses D-glyceraldehyde 3-phosphate + phosphate + NADP(+) = (2R)-3-phospho-glyceroyl phosphate + NADPH + H(+). It carries out the reaction D-glyceraldehyde 3-phosphate + phosphate + NAD(+) = (2R)-3-phospho-glyceroyl phosphate + NADH + H(+). The protein operates within carbohydrate degradation; glycolysis; pyruvate from D-glyceraldehyde 3-phosphate: step 1/5. The sequence is that of Glyceraldehyde-3-phosphate dehydrogenase from Haloarcula marismortui (strain ATCC 43049 / DSM 3752 / JCM 8966 / VKM B-1809) (Halobacterium marismortui).